A 613-amino-acid chain; its full sequence is MDKRMITDAFEEIKWNGWGDTGVCIKYDEARQLPIHTNGKPMKHLLKFMKDDVLKVKGEFKIKPTPGLTKEEAIKRLPPPVVKQPFVDELRQVLSKDQIRLDAYARLTHIFGKNYRDLWRVRRGMIDRPPDAVILPNNHDDCVKIMELAQKHNVVVVPFGGGTNVTGGVEPNPFETRRMVISIDMRRMGRMLHIDTESGTAVFEVGVLGPDIDEQLSRYGFMMGHDPDSYAYSTLGGWIAARGSGAMSNKYGDIENMILAMRVVTPVGVVETPLTSRPCGVDLNAMFVGSEGAFGLVTEAVVKIERLPEVKRYEGWLFPSFEVAFTAFHTCTRKGIHPCTMRLYDEDDTRLSFAASTDSGLVSTFFSKCFKKYIATVKGWNLSKISLVVVGFEGTKAQTNCQRSELVGVFQAFGATCLGTKPGNTWQEKKYDLPYLRDFALAHNFWADVFETSVLYTDAIHCWRAVKKSFAEVMAENGKNAWIGCHTAHQYRFGCCLYFTFIGGQADENDLKIFLQVKKRAMEVMLQHRGNLTHHHGIGYEHVPWMKRYNGEGGLDAIMKFKKALDPKNICNPGKLLPSPPSEKETPKATQARQNREMMFDKMGIPGALQAHL.

Residues 126-307 (IDRPPDAVIL…TEAVVKIERL (182 aa)) enclose the FAD-binding PCMH-type domain. Residues 158–164 (PFGGGTN), 228–234 (DSYAYST), 241–244 (ARGS), and 291–297 (EGAFGLV) each bind FAD. Arg437 is a substrate binding site. Tyr498 functions as the Proton donor/acceptor in the catalytic mechanism. The important for enzyme activity stretch occupies residues 534–536 (HHH). A disordered region spans residues 572 to 593 (NPGKLLPSPPSEKETPKATQAR). Residues 611 to 613 (AHL) carry the Microbody targeting signal motif.

This sequence belongs to the FAD-binding oxidoreductase/transferase type 4 family. As to quaternary structure, homodimer. It depends on FAD as a cofactor.

The protein resides in the peroxisome. It carries out the reaction a long chain fatty alcohol + a 1-acylglycerone 3-phosphate = a 1-O-alkylglycerone 3-phosphate + a long-chain fatty acid + H(+). The protein operates within glycerolipid metabolism; ether lipid biosynthesis. Functionally, catalyzes the exchange of an acyl for a long-chain alkyl group and the formation of the ether bond in the biosynthesis of ether phospholipids. In Trypanosoma brucei brucei, this protein is Alkyldihydroxyacetonephosphate synthase.